The primary structure comprises 501 residues: MVIALSDSFIENPRSFLQRFQDALFAGSKPDLQGTLGIDEEVSNIFATEERIRKIPNYLDCKWSELKTGQLLRLQGMVQDTNFGHEFFAGAVEVNENIWRGCRYILDFSEDEMHLDESKIVLDERYSLFLTNVPGERTLPVIEALGNWGSESLKERSLKYSNRLQASNDTGVCVKCYGGMETKVQVCQAIDVIGIYEEPSEYSDGLPILHMLCFKDYTQSATQAPSPQQAEIIRPKILKYFEKVLGENIAAESLMLALLSNVVHKTTGLVIGGFTLNLTNCTSELVSQLVSVLRPLIKRMVIQKVNVAELNRKPLYPLSDGETLDTSHLQVAPGTLIVLDETELSSGTLNDVGCRNVQFLSSLISQQDLTFFYPFSSFTVHSNVRIIILSHGRSILPADVGCRCRGDSPDTIEFPTDSDELQEFCNFFHMWNMRANIPENMLDYIQSTYVSSRQYNKEINEKTLSLQINCSRLYAKSFGRQLVSRIDFEAARSLINHWTVN.

Belongs to the UPF0616 family.

It is found in the cytoplasm. It localises to the nucleus. The chain is UPF0616 protein C1687.04 from Schizosaccharomyces pombe (strain 972 / ATCC 24843) (Fission yeast).